The sequence spans 908 residues: DNA polymerase I (908 aa).

A 5'-3' exonuclease domain is found at 1 to 318 (MKELYLIDAL…DDINTIDTEN (318 aa)). The 3'-5' exonuclease domain occupies 319 to 531 (VKYRSITTKI…MEENGIYLDK (213 aa)). A polymerase region spans residues 532–908 (EYLKEYGKEL…ETGKSWGEIH (377 aa)).

The protein belongs to the DNA polymerase type-A family.

The enzyme catalyses DNA(n) + a 2'-deoxyribonucleoside 5'-triphosphate = DNA(n+1) + diphosphate. Its function is as follows. In addition to polymerase activity, this DNA polymerase exhibits 3'-5' and 5'-3' exonuclease activity. This is DNA polymerase I (polA) from Borreliella burgdorferi (strain ATCC 35210 / DSM 4680 / CIP 102532 / B31) (Borrelia burgdorferi).